Consider the following 211-residue polypeptide: Envelope protein UL45 homolog (211 aa).

Residues 1–46 (MMSPTPEDDRDLVVVRGRLRMMDNGAEHDRERRSYTAWPHLCCGCT) lie on the Intravirion side of the membrane. A helical; Signal-anchor for type II membrane protein transmembrane segment spans residues 47-67 (IGIILTMFVIATTLLLASLFA). Residues 68–211 (FSYMSLESGT…SSILSNAIMK (144 aa)) lie on the Virion surface side of the membrane. 2 N-linked (GlcNAc...) asparagine; by host glycosylation sites follow: Asn96 and Asn133.

Belongs to the herpesviridae HHV-1 UL45 family.

It is found in the virion membrane. The polypeptide is Envelope protein UL45 homolog (UL45H) (Gallid herpesvirus 2 (strain bc-1) (GaHV-2)).